Here is a 118-residue protein sequence, read N- to C-terminus: NADH-quinone oxidoreductase subunit A 2 (118 aa).

The next 3 helical transmembrane spans lie at 5–25 (YLPI…SLVF), 60–80 (FYII…LYPW), and 87–107 (LGMF…VGYI).

It belongs to the complex I subunit 3 family. NDH-1 is composed of 14 different subunits. Subunits NuoA, H, J, K, L, M, N constitute the membrane sector of the complex.

The protein localises to the cell inner membrane. It carries out the reaction a quinone + NADH + 5 H(+)(in) = a quinol + NAD(+) + 4 H(+)(out). Its function is as follows. NDH-1 shuttles electrons from NADH, via FMN and iron-sulfur (Fe-S) centers, to quinones in the respiratory chain. The immediate electron acceptor for the enzyme in this species is believed to be ubiquinone. Couples the redox reaction to proton translocation (for every two electrons transferred, four hydrogen ions are translocated across the cytoplasmic membrane), and thus conserves the redox energy in a proton gradient. This Geobacter metallireducens (strain ATCC 53774 / DSM 7210 / GS-15) protein is NADH-quinone oxidoreductase subunit A 2.